We begin with the raw amino-acid sequence, 721 residues long: Glycine--tRNA ligase beta subunit (721 aa).

This sequence belongs to the class-II aminoacyl-tRNA synthetase family. Tetramer of two alpha and two beta subunits.

The protein resides in the cytoplasm. The enzyme catalyses tRNA(Gly) + glycine + ATP = glycyl-tRNA(Gly) + AMP + diphosphate. In Sinorhizobium fredii (strain NBRC 101917 / NGR234), this protein is Glycine--tRNA ligase beta subunit.